The chain runs to 318 residues: Ferric enterobactin-binding periplasmic protein FepB (318 aa).

The signal sequence occupies residues 1 to 26 (MRLAPLYRNALLLTGLLLSGIAAVQA). The 271-residue stretch at 48 to 318 (RIVSTSVTLT…QVLDRLKALF (271 aa)) folds into the Fe/B12 periplasmic-binding domain.

The protein belongs to the bacterial solute-binding protein 8 family. The complex is composed of two ATP-binding proteins (FepC), two transmembrane proteins (FepD and FepG) and a solute-binding protein (FepB).

Its subcellular location is the periplasm. Functionally, part of the ABC transporter complex FepBDGC involved in ferric enterobactin uptake. Binds ferric enterobactin. In Escherichia coli O6:H1 (strain CFT073 / ATCC 700928 / UPEC), this protein is Ferric enterobactin-binding periplasmic protein FepB (fepB).